The chain runs to 143 residues: NADH-quinone oxidoreductase subunit A (143 aa).

Transmembrane regions (helical) follow at residues 8–28 (FGNV…GYLT), 63–83 (FYVV…LFPW), and 93–113 (FALI…VYAW).

It belongs to the complex I subunit 3 family. As to quaternary structure, NDH-1 is composed of 14 different subunits. Subunits NuoA, H, J, K, L, M, N constitute the membrane sector of the complex.

It localises to the cell inner membrane. The enzyme catalyses a quinone + NADH + 5 H(+)(in) = a quinol + NAD(+) + 4 H(+)(out). Its function is as follows. NDH-1 shuttles electrons from NADH, via FMN and iron-sulfur (Fe-S) centers, to quinones in the respiratory chain. The immediate electron acceptor for the enzyme in this species is believed to be a menaquinone. Couples the redox reaction to proton translocation (for every two electrons transferred, four hydrogen ions are translocated across the cytoplasmic membrane), and thus conserves the redox energy in a proton gradient. This is NADH-quinone oxidoreductase subunit A from Chlorobium luteolum (strain DSM 273 / BCRC 81028 / 2530) (Pelodictyon luteolum).